An 837-amino-acid chain; its full sequence is Espin (837 aa).

ANK repeat units lie at residues 1-31, 35-66, 69-99, 103-132, 137-167, 171-201, 205-235, 238-267, and 270-299; these read MALE…GPSL, LDAL…AVSR, NGAT…RVQE, SGAT…ANSA, TGAL…GVNA, NGAT…DPHL, DGMT…SFEQ, DGAT…EISQ, and WGGT…GLDV. 2 positions are modified to phosphoserine: S337 and S341. Residues 339–348 show a composition bias toward basic and acidic residues; it reads DPSMDLEAKQ. Disordered stretches follow at residues 339-459, 477-712, 745-767, and 785-816; these read DPSM…VGLH, DSLK…PATL, KLQQ…EARL, and EREQ…TLGY. Over residues 351–364 the composition is skewed to polar residues; sequence SGMSSPNTTMSVQP. Low complexity predominate over residues 376-395; it reads LSNYDSCSSSHSSSKGQRST. 2 positions are modified to phosphoserine: S400 and S401. Pro residues predominate over residues 423–455; sequence SLPPPPPPSFPPPPPPGTQLPPPPPGYPAPNPP. 3 positions are modified to phosphoserine: S497, S504, and S531. Positions 581-604 are enriched in pro residues; it reads LPPPPPPPPLPEALSSPPPAPPLP. Residues 617-626 are compositionally biased toward low complexity; that stretch reads SSSSTGSTKS. Composition is skewed to polar residues over residues 627–636 and 651–662; these read FNMMSPTGDN and PTPQSKGLTTVF. S631 bears the Phosphoserine mark. In terms of domain architecture, WH2 spans 635-652; the sequence is DNSELLAEIKAGKSLKPT. The span at 663 to 673 shows a compositional bias: low complexity; the sequence is SGSGQPASQPE. Phosphoserine is present on residues S670, S674, and S680. Residues 738–814 are a coiled coil; it reads KRQVMVRKLQ…KEQSEKLRTL (77 aa).

In terms of assembly, monomer. Interacts with PFN2. Binds F-actin in a Ca(2+)-resistant fashion. Interacts (via N-terminal) with BAIAP2 (via SH3-domain). Interacts with MYO3A (via C-terminus). Interacts with MYO3B (via C-terminus). In terms of tissue distribution, expressed at high concentration in the microvillar parallel actin bundle (PAB) of hair cells stereocilia in the cochlea and vestibular system. Detected also at high levels of a number of other sensory cell types, including taste receptor cells, solitary chemoreceptor cells, vomeronasal sensory neurons and Merkel cells. Isoform 1 is detected in testis. Isoforms 2 is detected in small intestine and kidney (at protein level). Isoforms 3, 4, 6 and 8 are expressed in Purkinje cells dendritic spines.

It localises to the cytoplasm. Its subcellular location is the cytoskeleton. It is found in the cell projection. The protein localises to the stereocilium. The protein resides in the microvillus. It localises to the cell junction. Its subcellular location is the dendritic spine. Functionally, multifunctional actin-bundling protein. Plays a major role in regulating the organization, dimension, dynamics and signaling capacities of the actin filament-rich microvilli in the mechanosensory and chemosensory cells. Required for the assembly and stabilization of the stereociliary parallel actin bundles. Plays a crucial role in the formation and maintenance of inner ear hair cell stereocilia. Involved in the elongation of actin in stereocilia. In extrastriolar hair cells, required for targeting MYO3B to stereocilia tips, and for regulation of stereocilia diameter and staircase formation. This chain is Espin (Espn), found in Rattus norvegicus (Rat).